Here is a 330-residue protein sequence, read N- to C-terminus: Ornithine carbamoyltransferase (330 aa).

Carbamoyl phosphate contacts are provided by residues S57–T60, Q84, R108, and H135–Q138. L-ornithine contacts are provided by residues N168, D232, and S236–M237. Residues C273 to L274 and R318 each bind carbamoyl phosphate.

It belongs to the aspartate/ornithine carbamoyltransferase superfamily. OTCase family.

The protein localises to the cytoplasm. It carries out the reaction carbamoyl phosphate + L-ornithine = L-citrulline + phosphate + H(+). The protein operates within amino-acid biosynthesis; L-arginine biosynthesis; L-arginine from L-ornithine and carbamoyl phosphate: step 1/3. In terms of biological role, reversibly catalyzes the transfer of the carbamoyl group from carbamoyl phosphate (CP) to the N(epsilon) atom of ornithine (ORN) to produce L-citrulline. This is Ornithine carbamoyltransferase from Alkaliphilus metalliredigens (strain QYMF).